Here is a 357-residue protein sequence, read N- to C-terminus: Holliday junction branch migration complex subunit RuvB (357 aa).

Residues M1–P15 show a composition bias toward low complexity. Positions M1–I30 are disordered. A large ATPase domain (RuvB-L) region spans residues D13–Y195. Residues L34, R35, G76, K79, T80, T81, E142–F144, R185, Y195, and R232 contribute to the ATP site. T80 provides a ligand contact to Mg(2+). The interval N196–D266 is small ATPAse domain (RuvB-S). The interval P269–K357 is head domain (RuvB-H). Residues R305, R324, and R329 each contribute to the DNA site.

This sequence belongs to the RuvB family. Homohexamer. Forms an RuvA(8)-RuvB(12)-Holliday junction (HJ) complex. HJ DNA is sandwiched between 2 RuvA tetramers; dsDNA enters through RuvA and exits via RuvB. An RuvB hexamer assembles on each DNA strand where it exits the tetramer. Each RuvB hexamer is contacted by two RuvA subunits (via domain III) on 2 adjacent RuvB subunits; this complex drives branch migration. In the full resolvosome a probable DNA-RuvA(4)-RuvB(12)-RuvC(2) complex forms which resolves the HJ.

It localises to the cytoplasm. It carries out the reaction ATP + H2O = ADP + phosphate + H(+). In terms of biological role, the RuvA-RuvB-RuvC complex processes Holliday junction (HJ) DNA during genetic recombination and DNA repair, while the RuvA-RuvB complex plays an important role in the rescue of blocked DNA replication forks via replication fork reversal (RFR). RuvA specifically binds to HJ cruciform DNA, conferring on it an open structure. The RuvB hexamer acts as an ATP-dependent pump, pulling dsDNA into and through the RuvAB complex. RuvB forms 2 homohexamers on either side of HJ DNA bound by 1 or 2 RuvA tetramers; 4 subunits per hexamer contact DNA at a time. Coordinated motions by a converter formed by DNA-disengaged RuvB subunits stimulates ATP hydrolysis and nucleotide exchange. Immobilization of the converter enables RuvB to convert the ATP-contained energy into a lever motion, pulling 2 nucleotides of DNA out of the RuvA tetramer per ATP hydrolyzed, thus driving DNA branch migration. The RuvB motors rotate together with the DNA substrate, which together with the progressing nucleotide cycle form the mechanistic basis for DNA recombination by continuous HJ branch migration. Branch migration allows RuvC to scan DNA until it finds its consensus sequence, where it cleaves and resolves cruciform DNA. The polypeptide is Holliday junction branch migration complex subunit RuvB (Bordetella pertussis (strain Tohama I / ATCC BAA-589 / NCTC 13251)).